The following is a 453-amino-acid chain: Bifunctional protein GlmU (453 aa).

The segment at 1 to 225 (MNIVILAAGT…EWETLGVNSK (225 aa)) is pyrophosphorylase. UDP-N-acetyl-alpha-D-glucosamine-binding positions include 6–9 (LAAG), K20, Q71, 76–77 (GT), 98–100 (YGD), G135, E150, N165, and N223. Residue D100 coordinates Mg(2+). N223 is a Mg(2+) binding site. The interval 226-246 (QQLAELERIHQHNVADALLVA) is linker. An N-acetyltransferase region spans residues 247–453 (GVTLADPARL…GYVRPTKKKS (207 aa)). 2 residues coordinate UDP-N-acetyl-alpha-D-glucosamine: R329 and K347. H359 serves as the catalytic Proton acceptor. Residues Y362 and N373 each contribute to the UDP-N-acetyl-alpha-D-glucosamine site. Residues A376, 382 to 383 (NY), S401, and A419 contribute to the acetyl-CoA site.

The protein in the N-terminal section; belongs to the N-acetylglucosamine-1-phosphate uridyltransferase family. In the C-terminal section; belongs to the transferase hexapeptide repeat family. Homotrimer. The cofactor is Mg(2+).

It localises to the cytoplasm. It carries out the reaction alpha-D-glucosamine 1-phosphate + acetyl-CoA = N-acetyl-alpha-D-glucosamine 1-phosphate + CoA + H(+). The catalysed reaction is N-acetyl-alpha-D-glucosamine 1-phosphate + UTP + H(+) = UDP-N-acetyl-alpha-D-glucosamine + diphosphate. It functions in the pathway nucleotide-sugar biosynthesis; UDP-N-acetyl-alpha-D-glucosamine biosynthesis; N-acetyl-alpha-D-glucosamine 1-phosphate from alpha-D-glucosamine 6-phosphate (route II): step 2/2. It participates in nucleotide-sugar biosynthesis; UDP-N-acetyl-alpha-D-glucosamine biosynthesis; UDP-N-acetyl-alpha-D-glucosamine from N-acetyl-alpha-D-glucosamine 1-phosphate: step 1/1. Its pathway is bacterial outer membrane biogenesis; LPS lipid A biosynthesis. Its function is as follows. Catalyzes the last two sequential reactions in the de novo biosynthetic pathway for UDP-N-acetylglucosamine (UDP-GlcNAc). The C-terminal domain catalyzes the transfer of acetyl group from acetyl coenzyme A to glucosamine-1-phosphate (GlcN-1-P) to produce N-acetylglucosamine-1-phosphate (GlcNAc-1-P), which is converted into UDP-GlcNAc by the transfer of uridine 5-monophosphate (from uridine 5-triphosphate), a reaction catalyzed by the N-terminal domain. This chain is Bifunctional protein GlmU, found in Paraburkholderia phytofirmans (strain DSM 17436 / LMG 22146 / PsJN) (Burkholderia phytofirmans).